We begin with the raw amino-acid sequence, 113 residues long: Hemerythrin (113 aa).

Positions 25, 54, 58, 73, 77, 101, and 106 each coordinate Fe cation.

The protein belongs to the hemerythrin family. As to quaternary structure, homooctamer.

Hemerythrin is a respiratory protein in blood cells of certain marine worms. The oxygen-binding site in each chain contains two iron atoms. The polypeptide is Hemerythrin (Themiste dyscrita (Peanut worm)).